Reading from the N-terminus, the 101-residue chain is Large ribosomal subunit protein uL24 (101 aa).

It belongs to the universal ribosomal protein uL24 family. In terms of assembly, part of the 50S ribosomal subunit.

Functionally, one of two assembly initiator proteins, it binds directly to the 5'-end of the 23S rRNA, where it nucleates assembly of the 50S subunit. One of the proteins that surrounds the polypeptide exit tunnel on the outside of the subunit. This chain is Large ribosomal subunit protein uL24, found in Borrelia recurrentis (strain A1).